Reading from the N-terminus, the 475-residue chain is MTTVRTGGAQTAEVPAGGRRDVPSGVKITALATGFVMATLDVTVVNVAGATIQESLDTTLTQLTWIVDGYVLTFASLLMLAGGLANRIGAKTVYLWGMGVFFLASLACALAPTAETLIAARLVQGAGAALFMPSSLSLLVFSFPEKRQRTRMLGLWSAIVATSSGLGPTVGGLMVSAFGWESIFLLNLPIGAIGMAMTYRYIAATESRATRLAVPGHLLWIVALAAVSFALIEGPQLGWTAGPVLTAYAVAVTAAALLALREHRVTNPVMPWQLFRGPGFTGANLVGFLFNFALFGSTFMLGLYFQHARGATPFQAGLELLPMTIFFPVANIVYARISARFSNGTLLTAFLLLAGAASLSMVTITASTPYWVVAVAVGVANIGAGIISPGMTAALVDAAGPENANVAGSVLNANRQIGSLVGIAAMGVVLHSTSDWDHGAAISFLAVGLAYLLGGLSAWRLIARPERRSAVTAAT.

Transmembrane regions (helical) follow at residues 28 to 48 (ITAL…VNVA), 65 to 85 (WIVD…GGLA), 93 to 113 (VYLW…LAPT), 123 to 143 (VQGA…VFSF), 152 to 172 (MLGL…TVGG), 173 to 193 (LMVS…IGAI), 212 to 232 (LAVP…FALI), 240 to 260 (TAGP…LLAL), 285 to 305 (LVGF…GLYF), 314 to 334 (FQAG…NIVY), 346 to 366 (LLTA…TITA), 371 to 391 (WVVA…SPGM), 416 to 436 (QIGS…TSDW), and 439 to 459 (GAAI…LSAW).

It belongs to the major facilitator superfamily.

It is found in the cell membrane. Resistance to the epoxide antibiotic methylenomycin A; probably by mediating its efflux. The chain is Methylenomycin A resistance protein (mmr) from Streptomyces coelicolor (strain ATCC BAA-471 / A3(2) / M145).